A 135-amino-acid chain; its full sequence is Large ribosomal subunit protein uL16 (135 aa).

This sequence belongs to the universal ribosomal protein uL16 family. As to quaternary structure, part of the 50S ribosomal subunit.

Its function is as follows. Binds 23S rRNA and is also seen to make contacts with the A and possibly P site tRNAs. This is Large ribosomal subunit protein uL16 from Bdellovibrio bacteriovorus (strain ATCC 15356 / DSM 50701 / NCIMB 9529 / HD100).